A 337-amino-acid chain; its full sequence is Glutaminase-asparaginase (337 aa).

Residues 10–337 (ANVVILATGG…KELQRIFWEY (328 aa)) form the Asparaginase/glutaminase domain. Threonine 20 acts as the Acyl-ester intermediate in catalysis. Substrate contacts are provided by residues serine 67 and 100-101 (TD).

Belongs to the asparaginase 1 family. Homotetramer.

The protein localises to the periplasm. It catalyses the reaction L-glutamine + H2O = L-glutamate + NH4(+). The catalysed reaction is L-asparagine + H2O = L-aspartate + NH4(+). The sequence is that of Glutaminase-asparaginase (ansB) from Pseudomonas sp. (strain ATCC 29598 / 7A).